A 255-amino-acid chain; its full sequence is 5'-nucleotidase SurE (255 aa).

Residues Asp-16, Asp-17, Ser-47, and Asn-100 each coordinate a divalent metal cation.

It belongs to the SurE nucleotidase family. The cofactor is a divalent metal cation.

Its subcellular location is the cytoplasm. The catalysed reaction is a ribonucleoside 5'-phosphate + H2O = a ribonucleoside + phosphate. In terms of biological role, nucleotidase that shows phosphatase activity on nucleoside 5'-monophosphates. The protein is 5'-nucleotidase SurE of Vibrio vulnificus (strain CMCP6).